The primary structure comprises 400 residues: Argininosuccinate synthase (400 aa).

ATP contacts are provided by residues 10 to 18 (AYSGGVDTS) and Ala-38. Tyr-89 provides a ligand contact to L-citrulline. An ATP-binding site is contributed by Gly-119. L-aspartate contacts are provided by Thr-121, Asn-125, and Asp-126. Asn-125 serves as a coordination point for L-citrulline. Residues Arg-129, Ser-177, Ser-186, Glu-262, and Tyr-274 each contribute to the L-citrulline site.

The protein belongs to the argininosuccinate synthase family. Type 1 subfamily. Homotetramer.

It is found in the cytoplasm. The enzyme catalyses L-citrulline + L-aspartate + ATP = 2-(N(omega)-L-arginino)succinate + AMP + diphosphate + H(+). It functions in the pathway amino-acid biosynthesis; L-arginine biosynthesis; L-arginine from L-ornithine and carbamoyl phosphate: step 2/3. This chain is Argininosuccinate synthase, found in Prochlorococcus marinus (strain NATL2A).